A 192-amino-acid chain; its full sequence is Ion-translocating oxidoreductase complex subunit B (192 aa).

Residues Met1–Ser26 are hydrophobic. Positions Glu32 to Val91 constitute a 4Fe-4S domain. Residues Cys49, Cys52, Cys57, Cys74, Cys117, Cys120, Cys123, Cys127, Cys147, Cys150, Cys153, and Cys157 each contribute to the [4Fe-4S] cluster site. 4Fe-4S ferredoxin-type domains lie at His108–Lys137 and Ala138–Ile167.

It belongs to the 4Fe4S bacterial-type ferredoxin family. RnfB subfamily. As to quaternary structure, the complex is composed of six subunits: RnfA, RnfB, RnfC, RnfD, RnfE and RnfG. [4Fe-4S] cluster serves as cofactor.

The protein resides in the cell inner membrane. In terms of biological role, part of a membrane-bound complex that couples electron transfer with translocation of ions across the membrane. The protein is Ion-translocating oxidoreductase complex subunit B of Pectobacterium atrosepticum (strain SCRI 1043 / ATCC BAA-672) (Erwinia carotovora subsp. atroseptica).